The chain runs to 107 residues: Putative double-stranded DNA mimic protein PC1_1990 (107 aa).

It belongs to the putative dsDNA mimic protein family.

Its function is as follows. May act as a double-stranded DNA (dsDNA) mimic. Probably regulates the activity of a dsDNA-binding protein. This Pectobacterium carotovorum subsp. carotovorum (strain PC1) protein is Putative double-stranded DNA mimic protein PC1_1990.